A 71-amino-acid chain; its full sequence is Putative defensin-like protein 303 (71 aa).

The first 25 residues, 1–25 (MKSNKATFFLGLLLVYAFCIMLIES), serve as a signal peptide directing secretion. Intrachain disulfides connect Cys27–Cys45, Cys33–Cys50, and Cys39–Cys52.

The protein belongs to the DEFL family.

Its subcellular location is the secreted. The protein is Putative defensin-like protein 303 of Arabidopsis thaliana (Mouse-ear cress).